The chain runs to 550 residues: Methyl-accepting chemotaxis protein PcaY (550 aa).

Residues 1 to 19 (MVPTRSTARMLANLKIRTG) are Cytoplasmic-facing. Residues 20–40 (MFWVLSLFSLTLLFSTASAWW) traverse the membrane as a helical segment. Residues 41 to 198 (AALGSDQQIT…ESDRRLARAQ (158 aa)) lie on the Periplasmic side of the membrane. The segment at 44–196 (GSDQQITELD…MLESDRRLAR (153 aa)) is ligand-binding domain. Arg-71 and Asn-75 together coordinate benzoate. Salicylate-binding residues include Arg-71, Asn-75, and Tyr-135. 71–78 (RSSANVSS) is a binding site for 3,4-dihydroxybenzoate. L-quinate-binding positions include 71–78 (RSSANVSS), Tyr-135, Gln-142, and Asn-158. Gln-169 contacts 3,4-dihydroxybenzoate. A helical transmembrane segment spans residues 199-219 (LLSLCLLGVTVVLAVLCWAFI). The Cytoplasmic portion of the chain corresponds to 220 to 550 (AQRVLHPLRE…MTALVGRFKV (331 aa)). The 53-residue stretch at 221 to 273 (QRVLHPLREAGGHFRRIASGDLSVPVQGQGNNEIGQLFHELQRMQQSQRDTLG) folds into the HAMP domain. The 237-residue stretch at 278-514 (CARQLDAAAT…EVDRNLLNIR (237 aa)) folds into the Methyl-accepting transducer domain.

Belongs to the methyl-accepting chemotaxis (MCP) protein family. In terms of assembly, ligand free PcaY_PP-ligand-binding domain (LBD) is present in a monomer-dimer equilibrium. Only the dimeric LBD is able to bind ligands which in turn causes dimer stabilization.

The protein resides in the cell inner membrane. Functionally, chemotactic-signal transducers respond to changes in the concentration of attractants and repellents in the environment, transduce a signal from the outside to the inside of the cell, and facilitate sensory adaptation through the variation of the level of methylation. PcaY recognizes a wide range of compounds containing a C6-membered ring with a carboxylate group. Binds preferentially compounds that serve as carbon sources and among them those that rapidly promote growth. Tightest binding compounds are quinate, shikimate, 3-dehydroshikimate and protocatechuate, which are at the interception of the biosynthetic shikimate and catabolic quinate pathways. The protein is Methyl-accepting chemotaxis protein PcaY of Pseudomonas putida (strain ATCC 47054 / DSM 6125 / CFBP 8728 / NCIMB 11950 / KT2440).